A 155-amino-acid chain; its full sequence is Small ribosomal subunit protein uS7c (155 aa).

This sequence belongs to the universal ribosomal protein uS7 family. Part of the 30S ribosomal subunit.

Its subcellular location is the plastid. It is found in the chloroplast. Functionally, one of the primary rRNA binding proteins, it binds directly to 16S rRNA where it nucleates assembly of the head domain of the 30S subunit. The chain is Small ribosomal subunit protein uS7c (rps7) from Staurastrum punctulatum (Green alga).